Reading from the N-terminus, the 123-residue chain is Large ribosomal subunit protein bL12 (123 aa).

It belongs to the bacterial ribosomal protein bL12 family. As to quaternary structure, homodimer. Part of the ribosomal stalk of the 50S ribosomal subunit. Forms a multimeric L10(L12)X complex, where L10 forms an elongated spine to which 2 to 4 L12 dimers bind in a sequential fashion. Binds GTP-bound translation factors.

Forms part of the ribosomal stalk which helps the ribosome interact with GTP-bound translation factors. Is thus essential for accurate translation. This chain is Large ribosomal subunit protein bL12, found in Borrelia duttonii (strain Ly).